The primary structure comprises 227 residues: Probable methylthioribulose-1-phosphate dehydratase (227 aa).

Cys-87 serves as a coordination point for substrate. Positions 105 and 107 each coordinate Zn(2+). Residue Glu-129 is the Proton donor/acceptor of the active site. Residue His-185 participates in Zn(2+) binding.

The protein belongs to the aldolase class II family. MtnB subfamily. Zn(2+) serves as cofactor.

Its subcellular location is the cytoplasm. The enzyme catalyses 5-(methylsulfanyl)-D-ribulose 1-phosphate = 5-methylsulfanyl-2,3-dioxopentyl phosphate + H2O. It functions in the pathway amino-acid biosynthesis; L-methionine biosynthesis via salvage pathway; L-methionine from S-methyl-5-thio-alpha-D-ribose 1-phosphate: step 2/6. Its function is as follows. Catalyzes the dehydration of methylthioribulose-1-phosphate (MTRu-1-P) into 2,3-diketo-5-methylthiopentyl-1-phosphate (DK-MTP-1-P). This Drosophila ananassae (Fruit fly) protein is Probable methylthioribulose-1-phosphate dehydratase.